Here is a 1311-residue protein sequence, read N- to C-terminus: MPVSLAVCETTTTTTANVVNAALRESLLGGSRSGAAVAGSGSASSLISGAGGAGASAANDDDSSSTATANTNLQNQIVASAKRVLLAKIEYEEVENYNDSVLDNLKTKYVVIKSPTPAAAAAATNNGNSNSAGSKILGANGHDNRQKQQNANGGCSTPTTTTTQTSSSSTSSSSIEHNNNPNELPKPKRVLYQRENIRIGWKQSERKWQIGAGMINVGNTCYLNSTLQALFHIPALANWLNSEQSHLENCNIGGESGGGGGGGGGNNGGFCIICAMAKTLQSTQSNASAIRPYHIYSKLKQICKHMVIGRQEDAHEFLRFLVEAMEKAYLMRYRNYKELDQLVKETTPLNQIFGGYLRSEVRCLSCNHVSITFQHFQDLLLDIRKSDTLDEAFDGYFSRERLEDMGYKCEGCKKKVSATKQFSLQRAPITLCIQLKRFSMIGNKLTKQISFKPRIDLSRFAARSPTAQGQLPLTYRLVSLVTHLGVSQHCGHYTAIGLTESGSYYNFDDSYVRPIAMQSVCSTNSYIMFYELDLNQPLATPANKLNGLRQLSNGHHHHQQQQQQHQQQQQQQPTVVATIASSPMATTRFIGPQLPPGGLNGYAMTTTTTATNNTTNGHSQKTAIQFKPQQNGILTVGSGKFQESGQQKSPLVGTNHKNEAPAVAPNANANANGKSSSNPNTNTTINTNTNNGNSNNNNTNATTANNSNKLNQQQQQYLPMSSSDEEDSDEEKMKRPTTTTPQLPSMPKMDGGGDEKPKTLTLTPTTTPTASTPTVSNPLKRLVPYESASEEEESSSGTPSSSTPTTTTTAAAAAASSPMQATAAATLPPPPTPTNARKRSLPDHHHHHPHHHVMVNGHGKSPKPASMPPATNFNSSSSKQKTDAIDEIFKSLNNFNKKRINNKNQKHNEGDEEEDDEETLEKETNNSSRLVSSSTNTSPTTNGWKQSQIVSSSSSNSKNVSTSAAAAAATTSSSTSTSAPPSPKTPPSPAVINSKTGLWKVTRNLDDDDDEEEEDEDDEEHIAPTPPPVVAKTHKNPFSSQQKPTPSPSTEAAPKRQKLFNGTSSSTPHVGNGYQSEPSTPNGGGSGSGSNGCLNELLKQSHRGYGSSSVLSWNGKQTELDKEPFELVCAKRIAVDHGDHDDGGGGDDGGGVGVVTTTTTTTTTTKNTTKTLTADAQEQRQRDLDDDEENEMDRGRQRKVKTATANGKSSGNSNNTTPGYNPFQEYESQKRWHNKSSNGPPRFYTQHASSSYRSNFHQRNKFKCNRGGNGGGGSGGISKFDHRHGLQRHLAAGGGFPRRPNANQQQQQQQS.

2 stretches are compositionally biased toward low complexity: residues 120–134 (AAAA…SAGS) and 156–174 (STPT…SSSS). Positions 120-189 (AAAATNNGNS…NPNELPKPKR (70 aa)) are disordered. Residues 212-533 (AGMINVGNTC…NSYIMFYELD (322 aa)) form the USP domain. The active-site Nucleophile is Cys-221. The Proton acceptor role is filled by His-492. The segment at 546 to 575 (NGLRQLSNGHHHHQQQQQQHQQQQQQQPTV) is disordered. Positions 560–572 (QQQQQHQQQQQQQ) are enriched in low complexity. Ser-581 carries the phosphoserine modification. Disordered stretches follow at residues 587 to 620 (TRFI…GHSQ), 640 to 1095 (KFQE…GCLN), and 1136 to 1311 (DHGD…QQQS). Composition is skewed to low complexity over residues 605–616 (TTTTTATNNTTN), 660–716 (APAV…QQQQ), and 759–774 (TLTL…STPT). Residue Thr-767 is modified to Phosphothreonine. Phosphoserine occurs at positions 787 and 789. Positions 795 to 826 (SSGTPSSSTPTTTTTAAAAAASSPMQATAAAT) are enriched in low complexity. Residues 836-853 (ARKRSLPDHHHHHPHHHV) show a composition bias toward basic residues. The segment covering 869–879 (PATNFNSSSSK) has biased composition (polar residues). A compositionally biased stretch (basic and acidic residues) spans 880-889 (QKTDAIDEIF). A compositionally biased stretch (basic residues) spans 896-905 (NKKRINNKNQ). The span at 910–920 (GDEEEDDEETL) shows a compositional bias: acidic residues. Low complexity-rich tracts occupy residues 925–942 (NNSS…PTTN) and 950–979 (VSSS…STSA). The span at 980 to 989 (PPSPKTPPSP) shows a compositional bias: pro residues. Ser-982 is subject to Phosphoserine. At Thr-985 the chain carries Phosphothreonine. The residue at position 988 (Ser-988) is a Phosphoserine. Over residues 1006–1020 (DDDDDEEEEDEDDEE) the composition is skewed to acidic residues. The span at 1037-1050 (PFSSQQKPTPSPST) shows a compositional bias: low complexity. A Phosphoserine modification is found at Ser-1047. Residue Thr-1050 is modified to Phosphothreonine. Polar residues predominate over residues 1060-1081 (FNGTSSSTPHVGNGYQSEPSTP). Low complexity-rich tracts occupy residues 1154-1176 (VVTT…TADA) and 1204-1221 (TANG…PGYN). The span at 1246-1255 (QHASSSYRSN) shows a compositional bias: polar residues. Over residues 1267–1276 (GGNGGGGSGG) the composition is skewed to gly residues.

It belongs to the peptidase C19 family. As to quaternary structure, interacts with atms/PAF1, but not with CycT.

The protein localises to the nucleus. It localises to the nucleolus. It catalyses the reaction Thiol-dependent hydrolysis of ester, thioester, amide, peptide and isopeptide bonds formed by the C-terminal Gly of ubiquitin (a 76-residue protein attached to proteins as an intracellular targeting signal).. Required for maintaining multiple types of adult stem cells, including male and female germline, epithelial follicle cell and intestinal stem cells. May function as a transcriptional repressor by continually deubiquiting histone H2B at the promoters of genes critical for cellular differentiation, thereby preventing histone H3 'Lys-4' trimethylation (H3K4). Controls selective autophagy activation by ubiquitinated proteins. In Drosophila willistoni (Fruit fly), this protein is Ubiquitin carboxyl-terminal hydrolase 36 (Usp36).